The following is a 425-amino-acid chain: Riboflavin biosynthesis protein RibBA (425 aa).

The segment at 1 to 204 (MTRLDSVERA…IADLIEWRRK (204 aa)) is DHBP synthase. Residues 28 to 29 (RE), Asp-33, 141 to 145 (RPGHT), and Glu-165 contribute to the D-ribulose 5-phosphate site. Position 29 (Glu-29) interacts with Mg(2+). His-144 lines the Mg(2+) pocket. The segment at 205 to 425 (HEKHIERIAE…HLPGEFGGAL (221 aa)) is GTP cyclohydrolase II. 259 to 263 (RVHSE) contributes to the GTP binding site. 3 residues coordinate Zn(2+): Cys-264, Cys-275, and Cys-277. GTP-binding positions include Gln-280, 303 to 305 (EGR), and Thr-325. The Proton acceptor; for GTP cyclohydrolase activity role is filled by Asp-337. Catalysis depends on Arg-339, which acts as the Nucleophile; for GTP cyclohydrolase activity. 2 residues coordinate GTP: Thr-360 and Lys-365.

In the N-terminal section; belongs to the DHBP synthase family. The protein in the C-terminal section; belongs to the GTP cyclohydrolase II family. Mg(2+) serves as cofactor. The cofactor is Mn(2+). Requires Zn(2+) as cofactor.

It catalyses the reaction D-ribulose 5-phosphate = (2S)-2-hydroxy-3-oxobutyl phosphate + formate + H(+). The catalysed reaction is GTP + 4 H2O = 2,5-diamino-6-hydroxy-4-(5-phosphoribosylamino)-pyrimidine + formate + 2 phosphate + 3 H(+). It functions in the pathway cofactor biosynthesis; riboflavin biosynthesis; 2-hydroxy-3-oxobutyl phosphate from D-ribulose 5-phosphate: step 1/1. Its pathway is cofactor biosynthesis; riboflavin biosynthesis; 5-amino-6-(D-ribitylamino)uracil from GTP: step 1/4. In terms of biological role, catalyzes the conversion of D-ribulose 5-phosphate to formate and 3,4-dihydroxy-2-butanone 4-phosphate. Catalyzes the conversion of GTP to 2,5-diamino-6-ribosylamino-4(3H)-pyrimidinone 5'-phosphate (DARP), formate and pyrophosphate. This chain is Riboflavin biosynthesis protein RibBA, found in Mycolicibacterium paratuberculosis (strain ATCC BAA-968 / K-10) (Mycobacterium paratuberculosis).